The chain runs to 866 residues: N-alpha-acetyltransferase 15, NatA auxiliary subunit (866 aa).

4 TPR repeats span residues 46–79 (GETL…DLKS), 80–113 (HVCW…DKDN), 148–184 (RASW…SPDK), and 224–257 (LAVE…NPEN). K262 carries the post-translational modification N6-acetyllysine. The residue at position 302 (S302) is a Phosphoserine. TPR repeat units follow at residues 374–407 (LWVQ…TPTL), 409–441 (ELFL…DTAD), and 485–518 (MWFQ…FIEI). The interval 500–866 (KFGEALKKCH…AEAEELANEI (367 aa)) is interaction with HYPK. 2 positions are modified to phosphoserine: S537 and S588. Over residues 579 to 594 (EHEADTANMSDKELKK) the composition is skewed to basic and acidic residues. The segment at 579-642 (EHEADTANMS…EEIGGPKEEL (64 aa)) is disordered. The span at 595–604 (LRNKQRRAQK) shows a compositional bias: basic residues. The segment covering 606-621 (AQIEEEKKNAEKEKQQ) has biased composition (basic and acidic residues). The Bipartite nuclear localization signal motif lies at 612–629 (KKNAEKEKQQRNQKKKKD). Residues 672 to 705 (IETHLFAFEIYFRKEKFLLMLQSVKRAFAIDSSH) form a TPR 8 repeat. 2 positions are modified to N6-acetyllysine: K735 and K756. Phosphoserine occurs at positions 855 and 856.

Component of the N-terminal acetyltransferase A complex (also called the NatA complex) composed of NAA10 and NAA15. Within the complex interacts with NAA10. Component of the N-terminal acetyltransferase A (NatA)/HYPK complex at least composed of NAA10, NAA15 and HYPK, which has N-terminal acetyltransferase activity. In complex with NAA10, interacts with HYPK. Component of the N-terminal acetyltransferase E (NatE) complex at least composed of NAA10, NAA15 and NAA50. Within the complex interacts with NAA10; the interaction is required for binding to NAA50. Interacts with NAAT50. The interaction of the NatA complex with NAA50 reduces the acetylation activity of the NatA complex. Component of the N-terminal acetyltransferase E (NatE)/HYPK complex at least composed of NAA10, NAA15, NAA50 and HYPK. In complex with NAA10 interacts with HYPK; the interaction with HYPK reduces the capacity of the NatA complex to interact with NAA50. Interacts with NAA11. Interacts with XRCC6 and XRCC5. Cleaved by caspases during apoptosis, resulting in a stable 35 kDa fragment. Expressed at high levels in testis and in ocular endothelial cells. Also found in brain (corpus callosum), heart, colon, bone marrow and at lower levels in most adult tissues, including thyroid, liver, pancreas, mammary and salivary glands, lung, ovary, urogenital system and upper gastrointestinal tract. Overexpressed in gastric cancer, in papillary thyroid carcinomas and in a Burkitt lymphoma cell line (Daudi). Specifically suppressed in abnormal proliferating blood vessels in eyes of patients with proliferative diabetic retinopathy.

The protein resides in the cytoplasm. It is found in the nucleus. Its function is as follows. Auxillary subunit of N-terminal acetyltransferase complexes which display alpha (N-terminal) acetyltransferase (NAT) activity. The NAT activity may be important for vascular, hematopoietic and neuronal growth and development. Required to control retinal neovascularization in adult ocular endothelial cells. In complex with XRCC6 and XRCC5 (Ku80), up-regulates transcription from the osteocalcin promoter. This chain is N-alpha-acetyltransferase 15, NatA auxiliary subunit (NAA15), found in Homo sapiens (Human).